We begin with the raw amino-acid sequence, 398 residues long: E3 ubiquitin-protein ligase ATL6 (398 aa).

A signal peptide spans 1-29; sequence MRSSDHMAFAGVLPIVFLLILSSADLAAS. Residues 50–70 form a helical membrane-spanning segment; sequence AVIVVILIAALFFMGFFSIYF. The RING-type; atypical zinc finger occupies 128-170; it reads CAICLNEFEDDETLRLLPKCDHVFHPHCIDAWLEAHVTCPVCR. At serine 278 the chain carries Phosphoserine. The disordered stretch occupies residues 368-398; the sequence is PRGGVNKDGEGTSVKSTGASGSTSGSVRLPV. The segment covering 378–398 has biased composition (low complexity); it reads GTSVKSTGASGSTSGSVRLPV.

The protein belongs to the RING-type zinc finger family. ATL subfamily.

It localises to the membrane. It catalyses the reaction S-ubiquitinyl-[E2 ubiquitin-conjugating enzyme]-L-cysteine + [acceptor protein]-L-lysine = [E2 ubiquitin-conjugating enzyme]-L-cysteine + N(6)-ubiquitinyl-[acceptor protein]-L-lysine.. It participates in protein modification; protein ubiquitination. Its function is as follows. E3 ubiquitin-protein ligase able to catalyze polyubiquitination with ubiquitin-conjugating enzyme E2 UBC8 in vitro. May be involved in the plant C/N response and the early steps of the plant defense signaling pathway. The polypeptide is E3 ubiquitin-protein ligase ATL6 (ATL6) (Arabidopsis thaliana (Mouse-ear cress)).